A 374-amino-acid chain; its full sequence is WAT1-related protein At2g39510 (374 aa).

Transmembrane regions (helical) follow at residues 9-29 (FITVVSLQFGYAGLSIIAKFA), 38-58 (VLASYRHIVATIFIAPFAYFL), 64-84 (PKMTLSIFFKILLLGLLEPTI), 99-119 (TFTAAMTNVLPAFAFIMAWIF), 135-155 (ILGTIVTVGGAMLMTVVKGPL), 182-202 (GASLIAIGCICWAGFINLQAI), 212-232 (SLTAYICFLGSIESTIVALFI), 249-269 (LAAVYGGVICSGIGYYVQGVI), 284-304 (LSMVIVAILGSIILAEVMFLG), and 306-326 (ILGAIVIVLGLYSVLWGKSKD). EamA domains follow at residues 19 to 147 (YAGL…GAML) and 191 to 320 (ICWA…YSVL). The disordered stretch occupies residues 350 to 374 (SKANAKMDTNDASVVISRPNTNESV).

The protein belongs to the drug/metabolite transporter (DMT) superfamily. Plant drug/metabolite exporter (P-DME) (TC 2.A.7.4) family.

Its subcellular location is the membrane. The polypeptide is WAT1-related protein At2g39510 (Arabidopsis thaliana (Mouse-ear cress)).